The sequence spans 419 residues: Tol-Pal system protein TolB (419 aa).

An N-terminal signal peptide occupies residues 1-19 (MCNRIISLFLLLFTGQVIA).

This sequence belongs to the TolB family. The Tol-Pal system is composed of five core proteins: the inner membrane proteins TolA, TolQ and TolR, the periplasmic protein TolB and the outer membrane protein Pal. They form a network linking the inner and outer membranes and the peptidoglycan layer.

It localises to the periplasm. Functionally, part of the Tol-Pal system, which plays a role in outer membrane invagination during cell division and is important for maintaining outer membrane integrity. The sequence is that of Tol-Pal system protein TolB from Legionella pneumophila (strain Paris).